We begin with the raw amino-acid sequence, 1174 residues long: Male determiner protein Mdmd(III) (1174 aa).

Over residues 1–15 the composition is skewed to basic and acidic residues; it reads MNATDAESRKPENKP. Disordered stretches follow at residues 1 to 51, 80 to 109, and 136 to 259; these read MNAT…SGQR, KDGSNEMLPKEDSINTNHNYTTDSNEHPVE, and KQLS…LRRS. A compositionally biased stretch (low complexity) spans 16–35; the sequence is SSESSSSGSTSGSSDGEVSS. The span at 36-47 shows a compositional bias: polar residues; the sequence is KTYFKNNKSKVL. Over residues 80–92 the composition is skewed to basic and acidic residues; that stretch reads KDGSNEMLPKEDS. Positions 93-102 are enriched in polar residues; it reads INTNHNYTTD. Residues 138-153 are compositionally biased toward low complexity; the sequence is LSAYRSRSRSTRLSYS. Positions 167-180 are enriched in basic residues; it reads SRYKKSVLRNRRTS. Residues 183 to 200 show a composition bias toward basic and acidic residues; that stretch reads HGRDSSTTKRSVSRDKDN. Residues 201–223 show a composition bias toward basic residues; it reads RLRRRIGSSRSHTRSHSRFRRSE. Residues 235–259 show a composition bias toward basic and acidic residues; sequence RSQERRHERRRSMSSDYERIALRRS. The 184-residue stretch at 348–531 folds into the MIF4G domain; the sequence is KKYIHGYINK…KVLFQVRRDG (184 aa). Residues 641–757 form the MI domain; it reads ALRRTIYLTL…SWDVLDCIKL (117 aa). Residues 840-857 show a composition bias toward low complexity; that stretch reads SAPSSSSSSSLSSELSAP. Disordered stretches follow at residues 840–1045 and 1096–1133; these read SAPS…SRTK and KDNYGNRQNHEISQRHDSEIKRRREERKKRHHEKNHSR. The span at 869–909 shows a compositional bias: basic residues; it reads KKKHKGKNKKMTKKKNPSKKKEKTKKFVGKNKIAAKNKTIK. A compositionally biased stretch (basic and acidic residues) spans 910–924; it reads RRTDKDNSSSKDNFL. Over residues 926–957 the composition is skewed to low complexity; it reads SESSSNESISLDSLSSELFAPSSYSSSESSND. Positions 963–1001 are enriched in basic residues; it reads KHKGKNKKMTKKKNPSNKKEKTKKKLSKNKKAPNKNTKK. Low complexity predominate over residues 1010–1020; sequence SSESSISESKS. Basic residues predominate over residues 1034-1045; the sequence is RKKRVTSKSRTK. Basic and acidic residues predominate over residues 1103–1118; the sequence is QNHEISQRHDSEIKRR. The span at 1119 to 1130 shows a compositional bias: basic residues; the sequence is REERKKRHHEKN.

This sequence belongs to the CWC22 family. As to quaternary structure, component of the spliceosome C complex.

The protein localises to the nucleus speckle. Functionally, male determiner protein (M-factor) that controls male somatic sexual differentiation. Acts as a dominant factor that regulates the mRNA splicing of transformer (tra) and doublesex (dsx) transcripts and promotes expression of male splice forms of tra and dsx. Probably acts as a component of the spliceosome C complex required for mRNA splicing factor and exon-junction complex (EJC) assembly. Hinders eIF4AIII from non-specifically binding RNA and escorts it to the splicing machinery to promote EJC assembly on mature mRNAs. The sequence is that of Male determiner protein Mdmd(III) from Musca domestica (House fly).